Consider the following 107-residue polypeptide: MILTTTEEVPGYAVGEVLGVVSGNTVRAKNVGRDITAGLKSLVGGELEEYTAMLADARTEAYNRMANAARDLGADAVVNVRFATSQTMAAAAELLAYGTAVKLVPRK.

This sequence belongs to the UPF0145 family.

The chain is UPF0145 protein Memar_1285 from Methanoculleus marisnigri (strain ATCC 35101 / DSM 1498 / JR1).